The primary structure comprises 442 residues: Armadillo-like helical domain containing protein 1 (442 aa).

In Bos taurus (Bovine), this protein is Armadillo-like helical domain containing protein 1.